A 497-amino-acid chain; its full sequence is Pancreatic alpha-amylase (497 aa).

A Pyrrolidone carboxylic acid modification is found at Gln1. 3 disulfides stabilise this stretch: Cys28/Cys86, Cys70/Cys115, and Cys141/Cys160. Ca(2+)-binding residues include Asn100, Arg158, and Asp167. Residue Arg195 coordinates chloride. Catalysis depends on Asp197, which acts as the Nucleophile. A Ca(2+)-binding site is contributed by His201. Catalysis depends on Glu233, which acts as the Proton donor. Residues Asn298 and Arg337 each coordinate chloride. 2 disulfides stabilise this stretch: Cys379/Cys385 and Cys451/Cys463.

Belongs to the glycosyl hydrolase 13 family. As to quaternary structure, monomer. The cofactor is Ca(2+). It depends on chloride as a cofactor.

Its subcellular location is the secreted. It is found in the extracellular space. The catalysed reaction is Endohydrolysis of (1-&gt;4)-alpha-D-glucosidic linkages in polysaccharides containing three or more (1-&gt;4)-alpha-linked D-glucose units.. The chain is Pancreatic alpha-amylase from Struthio camelus (Common ostrich).